Consider the following 181-residue polypeptide: Inner membrane-spanning protein YciB (181 aa).

The next 5 helical transmembrane spans lie at 24–44, 49–69, 81–101, 119–139, and 149–169; these read SATA…WLRH, NMLW…LILQ, LYWL…KNLI, LNIS…YVAY, and FKLF…ALLL.

The protein belongs to the YciB family.

It is found in the cell inner membrane. In terms of biological role, plays a role in cell envelope biogenesis, maintenance of cell envelope integrity and membrane homeostasis. The sequence is that of Inner membrane-spanning protein YciB from Nitrosomonas eutropha (strain DSM 101675 / C91 / Nm57).